We begin with the raw amino-acid sequence, 714 residues long: Ribonucleoside-diphosphate reductase 2 subunit alpha (714 aa).

Substrate contacts are provided by residues Thr-161, 177 to 178 (SC), Gly-206, 386 to 390 (NLCSE), and 588 to 592 (PTGSI). Cys-178 and Cys-415 form a disulfide bridge. Catalysis depends on Asn-386, which acts as the Proton acceptor. Cys-388 (cysteine radical intermediate) is an active-site residue. Glu-390 (proton acceptor) is an active-site residue.

It belongs to the ribonucleoside diphosphate reductase large chain family. Tetramer of two alpha and two beta subunits.

The catalysed reaction is a 2'-deoxyribonucleoside 5'-diphosphate + [thioredoxin]-disulfide + H2O = a ribonucleoside 5'-diphosphate + [thioredoxin]-dithiol. Its activity is regulated as follows. Under complex allosteric control mediated by deoxynucleoside triphosphates and ATP binding. The type of nucleotide bound at the specificity site determines substrate preference. It seems probable that ATP makes the enzyme reduce CDP and UDP, dGTP favors ADP reduction and dTTP favors GDP reduction. Lacks the N-terminal activity site. In terms of biological role, provides the precursors necessary for DNA synthesis. Catalyzes the biosynthesis of deoxyribonucleotides from the corresponding ribonucleotides. R1E contains the binding sites for both substrates and allosteric effectors and carries out the actual reduction of the ribonucleotide. This is Ribonucleoside-diphosphate reductase 2 subunit alpha (nrdE) from Salmonella typhimurium (strain LT2 / SGSC1412 / ATCC 700720).